A 244-amino-acid chain; its full sequence is Small ribosomal subunit protein uS2 (244 aa).

The disordered stretch occupies residues 224 to 244 (GQQGSDEAEEAEEAAEEVVAE). Over residues 229–244 (DEAEEAEEAAEEVVAE) the composition is skewed to acidic residues.

This sequence belongs to the universal ribosomal protein uS2 family.

In Desulfitobacterium hafniense (strain DSM 10664 / DCB-2), this protein is Small ribosomal subunit protein uS2.